The chain runs to 203 residues: Large ribosomal subunit protein bL25 (203 aa).

This sequence belongs to the bacterial ribosomal protein bL25 family. CTC subfamily. In terms of assembly, part of the 50S ribosomal subunit; part of the 5S rRNA/L5/L18/L25 subcomplex. Contacts the 5S rRNA. Binds to the 5S rRNA independently of L5 and L18.

This is one of the proteins that binds to the 5S RNA in the ribosome where it forms part of the central protuberance. The chain is Large ribosomal subunit protein bL25 from Pseudomonas syringae pv. tomato (strain ATCC BAA-871 / DC3000).